The sequence spans 353 residues: MTNYFRSNVEAMASYVPGEQPPQGTQVIKLNSNENPYPPSPEALAAIKDIDGECLRRYPEPFGEEFRKAVSQLLGVPCNWVIVGNGSDEILSIVIRACAEPTRKVVYPVPTYVLYRTLTEMQAADILEIPYREYNILPVADLIAAHGSVTFIASPNSPSGHVVPSDDLRKLASELSGVLVIDEAYVDFAEESALNLVQDHENVILIRTLSKGYSLAGLRLGFGVGNPQLLNGLFKVKDSYNVDAIACKVATAAITDQAYKNACVAKVKASRTRLAKDLKQLGFCVWDSQANFLLTQPPQGNAEYLYQQLREKKILIRYFKQPGLEDKLRITVGTDEQNQILLQALRDLLESRD.

N6-(pyridoxal phosphate)lysine is present on Lys211.

Belongs to the class-II pyridoxal-phosphate-dependent aminotransferase family. Histidinol-phosphate aminotransferase subfamily. Homodimer. The cofactor is pyridoxal 5'-phosphate.

The catalysed reaction is L-histidinol phosphate + 2-oxoglutarate = 3-(imidazol-4-yl)-2-oxopropyl phosphate + L-glutamate. The protein operates within amino-acid biosynthesis; L-histidine biosynthesis; L-histidine from 5-phospho-alpha-D-ribose 1-diphosphate: step 7/9. The sequence is that of Histidinol-phosphate aminotransferase 1 (hisC1) from Nostoc sp. (strain PCC 7120 / SAG 25.82 / UTEX 2576).